The primary structure comprises 214 residues: Vascular endothelial growth factor A (214 aa).

A signal peptide spans 1–26 (MNFLLSWVHWSLALLLYLHHAKWSQA). 3 cysteine pairs are disulfide-bonded: Cys-51–Cys-93, Cys-82–Cys-127, and Cys-86–Cys-129. Asn-100 carries an N-linked (GlcNAc...) asparagine glycan. The span at 131–142 (PKKDRARQEKKS) shows a compositional bias: basic and acidic residues. The segment at 131–162 (PKKDRARQEKKSIRGKGKGQKRKRKKSRYKPW) is disordered. Positions 143–159 (IRGKGKGQKRKRKKSRY) are enriched in basic residues.

It belongs to the PDGF/VEGF growth factor family. In terms of assembly, homodimer; disulfide-linked. Also found as heterodimer with PGF. Interacts with NRP1. Interacts with BSG. Interacts with CD82; this interaction inhibits VEGFA-mediated signaling pathway.

It localises to the secreted. Its function is as follows. Growth factor active in angiogenesis, vasculogenesis and endothelial cell growth. Induces endothelial cell proliferation, promotes cell migration, inhibits apoptosis and induces permeabilization of blood vessels. Binds to the FLT1/VEGFR1 and KDR/VEGFR2 receptors, heparan sulfate and heparin. Binding to NRP1 receptor initiates a signaling pathway needed for motor neuron axon guidance and cell body migration, including for the caudal migration of facial motor neurons from rhombomere 4 to rhombomere 6 during embryonic development. Also binds the DEAR/FBXW7-AS1 receptor. The sequence is that of Vascular endothelial growth factor A (VEGFA) from Canis lupus familiaris (Dog).